The primary structure comprises 393 residues: Branched-chain-amino-acid aminotransferase, mitochondrial (393 aa).

The N-terminal 27 residues, 1 to 27 (MAAATLGQVWARKLLPVPWLLCGSKRC), are a transit peptide targeting the mitochondrion. Tyr-169 lines the substrate pocket. Position 230 is an N6-(pyridoxal phosphate)lysine (Lys-230). Lys-322 bears the N6-acetyllysine mark.

Belongs to the class-IV pyridoxal-phosphate-dependent aminotransferase family. In terms of assembly, homodimer. It depends on pyridoxal 5'-phosphate as a cofactor.

It is found in the mitochondrion. The catalysed reaction is L-leucine + 2-oxoglutarate = 4-methyl-2-oxopentanoate + L-glutamate. The enzyme catalyses L-isoleucine + 2-oxoglutarate = (S)-3-methyl-2-oxopentanoate + L-glutamate. It carries out the reaction L-valine + 2-oxoglutarate = 3-methyl-2-oxobutanoate + L-glutamate. In terms of biological role, catalyzes the first reaction in the catabolism of the essential branched chain amino acids leucine, isoleucine, and valine. May also function as a transporter of branched chain alpha-keto acids. This is Branched-chain-amino-acid aminotransferase, mitochondrial (Bcat2) from Mus musculus (Mouse).